The sequence spans 148 residues: Protein Turandot Z (148 aa).

An N-terminal signal peptide occupies residues 1 to 23 (MYFAIRLSFVLAVLFCLTGNGSA).

This sequence belongs to the Turandot family.

The protein resides in the secreted. A humoral factor that may play a role in stress tolerance. The chain is Protein Turandot Z from Drosophila simulans (Fruit fly).